Here is a 1176-residue protein sequence, read N- to C-terminus: Leucine--tRNA ligase, cytoplasmic (1176 aa).

2 residues coordinate L-leucine: Tyr52 and Tyr54. The short motif at 60 to 63 (HLGH) is the 'HIGH' region element. Ser167 is modified (phosphoserine). The interval 260 to 509 (GPQEYTLLKL…DAGDALIYME (250 aa)) is editing domain. Positions 594 and 597 each coordinate L-leucine. The short motif at 716–720 (KMSKS) is the 'KMSKS' region element. Lys719 lines the ATP pocket. A Phosphoserine modification is found at Ser720. 2 positions are modified to N6-acetyllysine: Lys970 and Lys1047.

This sequence belongs to the class-I aminoacyl-tRNA synthetase family. Part of the aminoacyl-tRNA synthetase multienzyme complex, also known as multisynthetase complex (MSC), that is composed of the aminoacyl-tRNA ligases for Arg (RARS1), Asp (DARS1), Gln (QARS1), Ile (IARS1), Leu (LARS1), Lys (KARS1), Met (MARS1) the bifunctional ligase for Glu and Pro (EPRS1) and the auxiliary subunits AIMP1/p43, AIMP2/p38 and EEF1E1/p18.

The protein localises to the cytoplasm. It carries out the reaction tRNA(Leu) + L-leucine + ATP = L-leucyl-tRNA(Leu) + AMP + diphosphate. The catalysed reaction is L-methionyl-tRNA(Leu) + H2O = tRNA(Leu) + L-methionine + H(+). With respect to regulation, 5-fluoro-1,3-dihydro-1-hydroxy-1,2-benzoxaborole inhibits LARS1 by forming a covalent adduct with the 3' adenosine of tRNA(Leu) at the editing site, thus locking the enzyme in an inactive conformation. Functionally, aminoacyl-tRNA synthetase that catalyzes the specific attachment of leucine to its cognate tRNA (tRNA(Leu)). It performs tRNA aminoacylation in a two-step reaction: Leu is initially activated by ATP to form a leucyl-adenylate (Leu-AMP) intermediate; then the leucyl moiety is transferred to the acceptor 3' end of the tRNA to yield leucyl-tRNA. To improve the fidelity of catalytic reactions, it is also able to hydrolyze misactivated aminoacyl-adenylate intermediates (pre-transfer editing) and mischarged aminoacyl-tRNAs (post-transfer editing). In Homo sapiens (Human), this protein is Leucine--tRNA ligase, cytoplasmic.